The following is a 454-amino-acid chain: MSDQERGSENNNRSRSRSRSPVRRRMSDDHGYERDNHLSRRSGNYNGRRKFADTYRGSRDRGEYRGGRERSDYRERERFNNRDNPRSRDRYDDRRRGRDVTGRYGNRRDDYPRSFRSRHNTRDDSRRGGFGSSGARGDYGPLLARELDSTYEEKVNRNYSNSIFVGNLTYDSTPEDLTEFFSQIGKVVRADIITSRGHHRGMGTVEFTNSDDVDRAIRQYDGAFFMDRKIFVRQDNPPPSNNIKERKALDRGELRHNRKTHEVIVKNLPASVNWQALKDIFKECGNVAHADVELDGDGVSTGSGTVSFYDIKDLHRAIEKYNGYSIEGNVLDVKSKESVHNHSDGDDVDIPMDDSPVNEEARKFTENVVGGGERNRLIYCSNLPFSTAKSDLYDLFETIGKVNNAELRYDSKGAPTGIAVVEYDNVDDADVCIERLNNYNYGGCDLDISYAKRL.

A disordered region spans residues 1–141 (MSDQERGSEN…SSGARGDYGP (141 aa)). Positions 14–24 (SRSRSRSPVRR) are enriched in basic residues. 2 stretches are compositionally biased toward basic and acidic residues: residues 25–38 (RMSD…DNHL) and 50–113 (KFAD…DYPR). Arg-127 bears the Omega-N-methylarginine mark. 2 RRM domains span residues 161–237 (NSIF…QDNP) and 261–338 (HEVI…SKES). 3 positions are modified to phosphoserine: Ser-338, Ser-343, and Ser-355. An RRM 3 domain is found at 376-453 (RLIYCSNLPF…CDLDISYAKR (78 aa)).

Post-translationally, methylated by HMT1.

The protein localises to the cytoplasm. Its subcellular location is the nucleus. The protein resides in the P-body. It localises to the stress granule. In terms of biological role, binds to intron-containing transcripts and is involved in quality control for the export of spliced mRNAs from the nucleus. Binds to pre-mRNAs until splicing is completed or until faulty mRNAs are degraded. On correctly spliced mRNAs, GBP2 and HRB1 recruit MEX67 to allow nuclear export. On faulty mRNAs, GBP2 and HRB1 associate with the TRAMP complex that guides those pre-mRNAs to the exosome for degradation. The sequence is that of Serine/arginine (SR)-type shuttling mRNA binding protein HRB1 from Saccharomyces cerevisiae (strain ATCC 204508 / S288c) (Baker's yeast).